The primary structure comprises 200 residues: MSSGLPTLERSIELFSRLPGVGRKSAQRMVYHLLKEGGREATLLGQGLLALSERIHFCEVCHNLAEEGLCAICQDSKRDHGLICVVEEPVDVLAMERAGAYRGLYHVLGGRLSPMDGIGPDALYLDALLERLQQGGVRELIIATNPTVAGEATAHYITQLAQPLTIDISRLAYGMPMGGELEYLDESTLFQALQGRRGVL.

The C4-type zinc finger occupies 58 to 73 (CEVCHNLAEEGLCAIC). A Toprim domain is found at 81–176 (GLICVVEEPV…DISRLAYGMP (96 aa)).

The protein belongs to the RecR family.

Functionally, may play a role in DNA repair. It seems to be involved in an RecBC-independent recombinational process of DNA repair. It may act with RecF and RecO. This is Recombination protein RecR from Magnetococcus marinus (strain ATCC BAA-1437 / JCM 17883 / MC-1).